The sequence spans 32 residues: Lectin (32 aa).

It belongs to the leguminous lectin family. In terms of assembly, homotetramer.

In terms of biological role, metalloglycoprotein, containing Ca, Mg, Mn, and Zn and the carbohydrates galactose, glucosamine, mannose, and fucose. It agglutinates erythrocytes of blood group A1. In Macrotyloma axillare (Perennial horse gram), this protein is Lectin.